Reading from the N-terminus, the 220-residue chain is Heptaprenyl diphosphate synthase component 1 (220 aa).

Heterodimer of component I and II.

The catalysed reaction is 4 isopentenyl diphosphate + (2E,6E)-farnesyl diphosphate = all-trans-heptaprenyl diphosphate + 4 diphosphate. Supplies heptaprenyl diphosphate, the precursor for the side chain of the isoprenoid quinone menaquinone-7 (MQ-7). This Geobacillus stearothermophilus (Bacillus stearothermophilus) protein is Heptaprenyl diphosphate synthase component 1 (hepS).